The chain runs to 347 residues: Cannabinoid receptor 2 (347 aa).

The Extracellular portion of the chain corresponds to 1-33; sequence MEGCRETEVTNGSNGGLEFNPMKEYMILSSGQQ. Residue Asn-11 is glycosylated (N-linked (GlcNAc...) asparagine). The chain crosses the membrane as a helical span at residues 34-59; that stretch reads IAVAVLCTLMGLLSALENMAVLYIIL. Topologically, residues 60–71 are cytoplasmic; sequence SSRRLRRKPSYL. A helical membrane pass occupies residues 72–92; sequence FISSLAGADFLASVIFACNFV. Residues 93-104 lie on the Extracellular side of the membrane; it reads IFHVFHGVDSNA. The helical transmembrane segment at 105 to 129 threads the bilayer; the sequence is IFLLKIGSVTMTFTASVGSLLLTAV. At 130–149 the chain is on the cytoplasmic side; the sequence is DRYLCLCYPPTYKALVTRGR. Residues 150–172 traverse the membrane as a helical segment; it reads ALVALCVMWVLSALISYLPLMGW. At 173–188 the chain is on the extracellular side; that stretch reads TCCPSPCSELFPLIPN. The helical transmembrane segment at 189-214 threads the bilayer; it reads DYLLGWLLFIAILFSGIIYTYGYVLW. The Cytoplasmic portion of the chain corresponds to 215-246; the sequence is KAHRHVATLAEHQDRQVPGIARMRLDVRLAKT. Residues 247-267 traverse the membrane as a helical segment; sequence LGLVLAVLLICWFPALALMGH. Topologically, residues 268-279 are extracellular; sequence SLVTTLSDQVKE. Residues 280-301 form a helical membrane-spanning segment; it reads AFAFCSMLCLVNSMVNPIIYAL. Residues 302 to 347 are Cytoplasmic-facing; it reads RSGEIRSAAQHCLIGWKKYLQGLGPEGKEEGPRSSVTETEADVKTT. The segment at 326-347 is disordered; it reads PEGKEEGPRSSVTETEADVKTT. Residues Ser-335 and Ser-336 each carry the phosphoserine modification. Residue Thr-338 is modified to Phosphothreonine.

The protein belongs to the G-protein coupled receptor 1 family. In terms of tissue distribution, expressed by cells of hematopoietic origin. Expressed in skin in suprabasal layers and hair follicles, in brain by neurons and glial cells and by osteoblasts, osteocytes, osteoclasts (at protein level).

It localises to the cell membrane. It is found in the cell projection. The protein localises to the dendrite. The protein resides in the perikaryon. In terms of biological role, heterotrimeric G protein-coupled receptor for endocannabinoid 2-arachidonoylglycerol mediating inhibition of adenylate cyclase. May function in inflammatory response, nociceptive transmission and bone homeostasis. The chain is Cannabinoid receptor 2 (Cnr2) from Mus musculus (Mouse).